A 247-amino-acid chain; its full sequence is Pulmonary surfactant-associated protein A (247 aa).

An N-terminal signal peptide occupies residues 1-15 (MLLLSLALTLISAPA). Residues 27 to 99 (GSPGIPGTPG…PGERGPPGLP (73 aa)) enclose the Collagen-like domain. 4-hydroxyproline is present on residues Pro-29, Pro-32, Pro-35, Pro-41, Pro-53, Pro-56, Pro-62, Pro-66, and Pro-69. Positions 30–100 (GIPGTPGSHG…GERGPPGLPA (71 aa)) are disordered. The span at 41 to 50 (PGRDGRDGVK) shows a compositional bias: basic and acidic residues. Positions 53–64 (PGPPGPMGPPGG) are enriched in pro residues. Over residues 83–92 (ERGDKGEPGE) the composition is skewed to basic and acidic residues. A C-type lectin domain is found at 132–247 (AVGEKIFSTN…LQYRLVICEF (116 aa)). Intrachain disulfides connect Cys-154/Cys-245 and Cys-223/Cys-237. Asn-206 carries an N-linked (GlcNAc...) asparagine glycan. Positions 214, 216, 233, and 234 each coordinate Ca(2+).

The protein belongs to the SFTPA family. As to quaternary structure, oligomeric complex of 6 set of homotrimers.

The protein localises to the secreted. It localises to the extracellular space. The protein resides in the extracellular matrix. It is found in the surface film. In terms of biological role, in presence of calcium ions, it binds to surfactant phospholipids and contributes to lower the surface tension at the air-liquid interface in the alveoli of the mammalian lung and is essential for normal respiration. Enhances the expression of MYO18A/SP-R210 on alveolar macrophages. This chain is Pulmonary surfactant-associated protein A (SFTPA1), found in Oryctolagus cuniculus (Rabbit).